The sequence spans 427 residues: MERDFLGAIWRKEEAAGKPEEHSDYRGGGGGASAAMQWQFPATKVGAASSAFMSFRSSAAAAREEDPKEAAVFDRFSLSGFRPPPRPSPGDAFDGAAAMKQRQFGFNGRQQYAAAAQHGHREQGVDSYGVAAPHHFPSPSPSPRHPVPFGHANPMLRVHSLPNVAGGSPYRNQSFSVGNSVAGSTVGVYGGPRDLQNPKVTQMTIFYDGLVNVFDNIPVEKAQELMLLASRASIPSPPSAARKSDSPISAAAKLTVPEALPARQIVVQKPEASVPLVSGVSNPITIVSQAVTLPKSFSSSNDSAGPKSGGLPLAVTPLSQASPSQPIPVATTNASAIMPRAVPQARKASLARFLEKRKERVSSVAPYPSSKSPLESSDTIGSPSTPSKSSCTDITPSTNNCEDSLCLGQPRNISFSSQEPPSTKLQI.

The segment covering 1–25 (MERDFLGAIWRKEEAAGKPEEHSDY) has biased composition (basic and acidic residues). Disordered stretches follow at residues 1-32 (MERD…GGGA) and 128-154 (YGVA…HANP). Over residues 136 to 146 (FPSPSPSPRHP) the composition is skewed to pro residues. One can recognise a Tify domain in the interval 196–231 (QNPKVTQMTIFYDGLVNVFDNIPVEKAQELMLLASR). The disordered stretch occupies residues 296–327 (SFSSSNDSAGPKSGGLPLAVTPLSQASPSQPI). Residues 317 to 327 (PLSQASPSQPI) show a composition bias toward polar residues. The Jas motif lies at 343-367 (PQARKASLARFLEKRKERVSSVAPY). The Nuclear localization signal motif lies at 345 to 352 (ARKASLAR). The interval 361–427 (VSSVAPYPSS…QEPPSTKLQI (67 aa)) is disordered. 2 stretches are compositionally biased toward polar residues: residues 369 to 402 (SSKS…NNCE) and 411 to 427 (RNIS…KLQI).

The protein belongs to the TIFY/JAZ family. Interacts with COI1A. Interacts with COI1A and COI1B in a coronatine-dependent manner. Coronatine is an analog of jasmonoyl isoleucine (JA-Ile). Ubiquitinated. Targeted for degradation by the SCF(COI1) E3 ubiquitin ligase-proteasome pathway during jasmonate signaling.

The protein localises to the nucleus. In terms of biological role, repressor of jasmonate responses. In Oryza sativa subsp. japonica (Rice), this protein is Protein TIFY 6a.